The sequence spans 320 residues: Formimidoylglutamase (320 aa).

Mn(2+)-binding residues include H125, D153, H155, D157, D244, and D246.

It belongs to the arginase family. The cofactor is Mn(2+).

It carries out the reaction N-formimidoyl-L-glutamate + H2O = formamide + L-glutamate. Its pathway is amino-acid degradation; L-histidine degradation into L-glutamate; L-glutamate from N-formimidoyl-L-glutamate (hydrolase route): step 1/1. Functionally, catalyzes the conversion of N-formimidoyl-L-glutamate to L-glutamate and formamide. In Rhodococcus jostii (strain RHA1), this protein is Formimidoylglutamase.